A 449-amino-acid chain; its full sequence is Chromosomal replication initiator protein DnaA (449 aa).

The segment at 1–73 (MTQNPQWLWQ…TETIAELLQQ (73 aa)) is domain I, interacts with DnaA modulators. The interval 73 to 109 (QPVKVRLTSPEGNTLAATQSFYSSRSGQSTRPGKKTP) is domain II. The segment covering 90-103 (TQSFYSSRSGQSTR) has biased composition (polar residues). The disordered stretch occupies residues 90–110 (TQSFYSSRSGQSTRPGKKTPE). The domain III, AAA+ region stretch occupies residues 110 to 326 (ELNSKYTFSR…GALLRAVTHI (217 aa)). ATP contacts are provided by Gly154, Gly156, Lys157, and Thr158. A domain IV, binds dsDNA region spans residues 327 to 449 (AISGLPMTVE…DRINHHHQNL (123 aa)).

This sequence belongs to the DnaA family. In terms of assembly, oligomerizes as a right-handed, spiral filament on DNA at oriC.

The protein localises to the cytoplasm. Plays an essential role in the initiation and regulation of chromosomal replication. ATP-DnaA binds to the origin of replication (oriC) to initiate formation of the DNA replication initiation complex once per cell cycle. Binds the DnaA box (a 9 base pair repeat at the origin) and separates the double-stranded (ds)DNA. Forms a right-handed helical filament on oriC DNA; dsDNA binds to the exterior of the filament while single-stranded (ss)DNA is stabiized in the filament's interior. The ATP-DnaA-oriC complex binds and stabilizes one strand of the AT-rich DNA unwinding element (DUE), permitting loading of DNA polymerase. After initiation quickly degrades to an ADP-DnaA complex that is not apt for DNA replication. Binds acidic phospholipids. The sequence is that of Chromosomal replication initiator protein DnaA from Picosynechococcus sp. (strain ATCC 27264 / PCC 7002 / PR-6) (Agmenellum quadruplicatum).